The following is a 194-amino-acid chain: Mitochondrial import inner membrane translocase subunit Tim22 (194 aa).

Disulfide bonds link Cys69-Cys141 and Cys160-Cys179. A run of 3 helical transmembrane segments spans residues 74–94, 123–143, and 170–190; these read VLACVGGFVLGGAFGIFTAGI, MSYAKNFAIVGAMFSCTECLV, and AGVKAGAIGCGGFAAFSAAID.

Belongs to the Tim17/Tim22/Tim23 family. As to quaternary structure, component of the TIM22 complex, whose core is composed of TIMM22, associated with peripheral protein FXC1/TIMM10B and the 70 kDa heterohexamer. In most cases, the 70 kDa complex is composed of TIMM9 and TIMM10 (TIMM10A or TIMM10B). A small fraction of the 70 kDa complex is composed of TIMM8 (TIMM8A/DDP1 or TIMM8B/DDP2) and TIMM13. The TIM22 complex also contains AGK and TIMM29. Interacts directly with TIMM9, TIMM10A and FXC1/TIMM10B. Interacts (when oxidized) with TIMM29; interaction is direct. In terms of processing, disulfide bonds promote efficient assembly of the TIM22 complex.

It is found in the mitochondrion inner membrane. Functionally, essential core component of the TIM22 complex, a complex that mediates the import and insertion of multi-pass transmembrane proteins into the mitochondrial inner membrane. In the TIM22 complex, it constitutes the voltage-activated and signal-gated channel. Forms a twin-pore translocase that uses the membrane potential as external driving force in 2 voltage-dependent steps. This chain is Mitochondrial import inner membrane translocase subunit Tim22 (Timm22), found in Mus musculus (Mouse).